The following is a 385-amino-acid chain: Ribosomal RNA large subunit methyltransferase G (385 aa).

It belongs to the methyltransferase superfamily. RlmG family.

The protein localises to the cytoplasm. The enzyme catalyses guanosine(1835) in 23S rRNA + S-adenosyl-L-methionine = N(2)-methylguanosine(1835) in 23S rRNA + S-adenosyl-L-homocysteine + H(+). Specifically methylates the guanine in position 1835 (m2G1835) of 23S rRNA. This Vibrio campbellii (strain ATCC BAA-1116) protein is Ribosomal RNA large subunit methyltransferase G.